A 71-amino-acid polypeptide reads, in one-letter code: R-phycoerythrin gamma-1 chain, chloroplastic (71 aa).

Positions 25 and 34 each coordinate phycourobilin. Position 49 (Cys49) interacts with (2R,3E)-phycoerythrobilin. Phycourobilin is bound at residue Cys58.

In terms of assembly, heteromer of 6 alpha, 6 beta and 1 gamma chains. In terms of processing, contains four covalently linked bilin chromophores.

It is found in the plastid. It localises to the chloroplast thylakoid membrane. Critical for the incorporation of phycoerythrin in the phycobilisome complex. The chain is R-phycoerythrin gamma-1 chain, chloroplastic from Gastroclonium coulteri (Red alga).